The following is a 109-amino-acid chain: Ig kappa chain V region S211 (109 aa).

Positions 1 to 23 (DVQMTQSPSYLAASPGESVSISC) are framework-1. A complementarity-determining-1 region spans residues 24–35 (KASNKSISNNLA). The framework-2 stretch occupies residues 36–50 (WYZZKPGKANKLLIS). The complementarity-determining-2 stretch occupies residues 51-57 (SGSTLQS). Positions 58-89 (GTPSRFSGSGSDTDFTLTIRSLEFQDFAVYYC) are framework-3. Positions 90-98 (ZZYNEPYYT) are complementarity-determining-3. Residues 99–108 (FGAGTMLELK) form a framework-4 region.

The sequence is that of Ig kappa chain V region S211 from Rattus norvegicus (Rat).